Reading from the N-terminus, the 689-residue chain is DNA ligase (689 aa).

Residues 40–44 (DSEYD), 89–90 (SL), and Glu121 contribute to the NAD(+) site. Catalysis depends on Lys123, which acts as the N6-AMP-lysine intermediate. NAD(+)-binding residues include Arg144, Glu179, Lys295, and Lys319. Positions 413, 416, 431, and 437 each coordinate Zn(2+). The BRCT domain occupies 610 to 689 (REQSSLTDKI…EEWLTLIKNV (80 aa)).

Belongs to the NAD-dependent DNA ligase family. LigA subfamily. Mg(2+) is required as a cofactor. Mn(2+) serves as cofactor.

It catalyses the reaction NAD(+) + (deoxyribonucleotide)n-3'-hydroxyl + 5'-phospho-(deoxyribonucleotide)m = (deoxyribonucleotide)n+m + AMP + beta-nicotinamide D-nucleotide.. DNA ligase that catalyzes the formation of phosphodiester linkages between 5'-phosphoryl and 3'-hydroxyl groups in double-stranded DNA using NAD as a coenzyme and as the energy source for the reaction. It is essential for DNA replication and repair of damaged DNA. The polypeptide is DNA ligase (Rickettsia massiliae (strain Mtu5)).